Here is a 208-residue protein sequence, read N- to C-terminus: Small ribosomal subunit protein uS4 (208 aa).

The region spanning S98–D158 is the S4 RNA-binding domain.

Belongs to the universal ribosomal protein uS4 family. Part of the 30S ribosomal subunit. Contacts protein S5. The interaction surface between S4 and S5 is involved in control of translational fidelity.

Its function is as follows. One of the primary rRNA binding proteins, it binds directly to 16S rRNA where it nucleates assembly of the body of the 30S subunit. With S5 and S12 plays an important role in translational accuracy. The sequence is that of Small ribosomal subunit protein uS4 from Desulfosudis oleivorans (strain DSM 6200 / JCM 39069 / Hxd3) (Desulfococcus oleovorans).